The primary structure comprises 55 residues: A-type ATP synthase subunit G (55 aa).

Has multiple subunits, A(3), B(3), C, D, E, F, G, I and K(x); there may be a few other subunits as well.

Its subcellular location is the cell membrane. Functionally, component of the A-type ATP synthase that produces ATP from ADP in the presence of a proton gradient across the membrane. This chain is A-type ATP synthase subunit G (atpG), found in Methanosarcina mazei (strain ATCC BAA-159 / DSM 3647 / Goe1 / Go1 / JCM 11833 / OCM 88) (Methanosarcina frisia).